A 268-amino-acid chain; its full sequence is Tryptophan synthase alpha chain (268 aa).

Residues Glu49 and Asp60 each act as proton acceptor in the active site.

It belongs to the TrpA family. Tetramer of two alpha and two beta chains.

It catalyses the reaction (1S,2R)-1-C-(indol-3-yl)glycerol 3-phosphate + L-serine = D-glyceraldehyde 3-phosphate + L-tryptophan + H2O. Its pathway is amino-acid biosynthesis; L-tryptophan biosynthesis; L-tryptophan from chorismate: step 5/5. In terms of biological role, the alpha subunit is responsible for the aldol cleavage of indoleglycerol phosphate to indole and glyceraldehyde 3-phosphate. This chain is Tryptophan synthase alpha chain, found in Xanthomonas axonopodis pv. citri (strain 306).